The following is a 166-amino-acid chain: Putative tRNA (cytidine(34)-2'-O)-methyltransferase (166 aa).

Positions 83, 109, 130, and 138 each coordinate S-adenosyl-L-methionine.

The protein belongs to the class IV-like SAM-binding methyltransferase superfamily. RNA methyltransferase TrmH family. TrmL subfamily.

It is found in the cytoplasm. It catalyses the reaction cytidine(34) in tRNA + S-adenosyl-L-methionine = 2'-O-methylcytidine(34) in tRNA + S-adenosyl-L-homocysteine + H(+). The enzyme catalyses 5-carboxymethylaminomethyluridine(34) in tRNA(Leu) + S-adenosyl-L-methionine = 5-carboxymethylaminomethyl-2'-O-methyluridine(34) in tRNA(Leu) + S-adenosyl-L-homocysteine + H(+). Its function is as follows. Could methylate the ribose at the nucleotide 34 wobble position in tRNA. This is Putative tRNA (cytidine(34)-2'-O)-methyltransferase from Mycoplasma pneumoniae (strain ATCC 29342 / M129 / Subtype 1) (Mycoplasmoides pneumoniae).